The chain runs to 305 residues: MKYNVMFFGTPEIAKIVLETLFNMPEVNLIGVVSQPDSHFDRKKNVVYSPVKQFCLDHDIKLFQPQKIKEIEEEIRSLAPDIIITCAFGQFINQGIIDIPKYKIVNVHASLLPKLRGGAPIHYAILNGDLQTGITLMHTIKKMDAGNILFQRSLAINEQTTTKILTLELANLGALMIKEHFLELVKSDLVGIQQDENDVSFAYNIQKNQNIIDFNKPAFFVNRFVNAMYDKPIAIMEYNDVLIKVHQIKITNQKSTQKPGTIAISKHQIFVSTQDFNVELLLIQLPNKKPLAPKALLNGKNPFSN.

S110–P113 serves as a coordination point for (6S)-5,6,7,8-tetrahydrofolate.

It belongs to the Fmt family.

It catalyses the reaction L-methionyl-tRNA(fMet) + (6R)-10-formyltetrahydrofolate = N-formyl-L-methionyl-tRNA(fMet) + (6S)-5,6,7,8-tetrahydrofolate + H(+). Attaches a formyl group to the free amino group of methionyl-tRNA(fMet). The formyl group appears to play a dual role in the initiator identity of N-formylmethionyl-tRNA by promoting its recognition by IF2 and preventing the misappropriation of this tRNA by the elongation apparatus. This chain is Methionyl-tRNA formyltransferase, found in Ureaplasma urealyticum serovar 10 (strain ATCC 33699 / Western).